The sequence spans 376 residues: Putative F-box protein At1g30930 (376 aa).

One can recognise an F-box domain in the interval Met-1–Leu-44.

The chain is Putative F-box protein At1g30930 from Arabidopsis thaliana (Mouse-ear cress).